The primary structure comprises 304 residues: Protein phosphatase PTC7 homolog (304 aa).

The transit peptide at 1 to 68 directs the protein to the mitochondrion; that stretch reads MFSVLSYGRL…GDDACFVARH (68 aa). The PPM-type phosphatase domain maps to 69–299; the sequence is RSADVLGVAD…DDITVLLSIV (231 aa). The Mn(2+) site is built by D78, G79, and D223.

The protein belongs to the PP2C family. Interacts with FBXL4, BNIP3 and NIX; these interactions are important for ubiquitination and degradation of BNIP3 and NIX. Requires Mg(2+) as cofactor. The cofactor is Mn(2+). As to expression, expressed in keratinocytes (at protein level).

Its subcellular location is the mitochondrion matrix. It catalyses the reaction O-phospho-L-seryl-[protein] + H2O = L-seryl-[protein] + phosphate. The enzyme catalyses O-phospho-L-threonyl-[protein] + H2O = L-threonyl-[protein] + phosphate. With respect to regulation, inhibited by sodium orthovanadate. Protein phosphatase that plays an essential role in mitochondrial metabolism and biogenesis. Positively regulates biosynthesis of the ubiquinone, coenzyme Q. Dephosphorylates the ubiquinone biosynthesis protein COQ7 which is likely to lead to its activation. Serves as a crucial sensor for mitophagy, though the underlying mechanism remains ambiguous. May dephosphorylate BNIP3 and NIX and thereby directly regulates mitophagy receptor function and stability. Alternatively, promotes SCF-FBXL4-dependent ubiquitination and degradation of BNIP3 and NIX independently of its catalytic activity to restrain mitophagy. The polypeptide is Protein phosphatase PTC7 homolog (PPTC7) (Homo sapiens (Human)).